A 417-amino-acid polypeptide reads, in one-letter code: MLKKDMNIADYDPELFNAIQNETLRQEEHIELIASENYTSPRVMQAQGSQLTNKYAEGYPGKRYYGGCEYVDVVETLAIERAKQLFGATYANVQPHSGSQANSAVYMALLKPGDTVLGMNLAHGGHLTHGSPVNFSGRLYNIIPYGIDESGKIDYDEMERLAVEHKPKMMIGGFSAYSGIVDWARMREIADKIGAYLFVDMAHVAGLIAAGVYPNPVPHAHVVTSTTHKTLAGPRGGIILSAADDEDLYKKLNSAVFPGGQGGPLMHVIAGKAVAFKEALEPEFKAYQQQVVKNAKAMVEVFLERGYKIVSGGTDNHLMLVDLIGRDLTGKEADAALGSANITVNKNSVPNDPRSPFVTSGVRIGTPAITRRGFKEAEAKELTGWICDILDDAHNPAVIERVKGQVLALCARFPVYG.

(6S)-5,6,7,8-tetrahydrofolate-binding positions include L121 and 125–127 (GHL). K229 carries the N6-(pyridoxal phosphate)lysine modification. Position 355–357 (355–357 (SPF)) interacts with (6S)-5,6,7,8-tetrahydrofolate.

It belongs to the SHMT family. In terms of assembly, homodimer. The cofactor is pyridoxal 5'-phosphate.

The protein resides in the cytoplasm. It carries out the reaction (6R)-5,10-methylene-5,6,7,8-tetrahydrofolate + glycine + H2O = (6S)-5,6,7,8-tetrahydrofolate + L-serine. Its pathway is one-carbon metabolism; tetrahydrofolate interconversion. It participates in amino-acid biosynthesis; glycine biosynthesis; glycine from L-serine: step 1/1. Its function is as follows. Catalyzes the reversible interconversion of serine and glycine with tetrahydrofolate (THF) serving as the one-carbon carrier. This reaction serves as the major source of one-carbon groups required for the biosynthesis of purines, thymidylate, methionine, and other important biomolecules. Also exhibits THF-independent aldolase activity toward beta-hydroxyamino acids, producing glycine and aldehydes, via a retro-aldol mechanism. This chain is Serine hydroxymethyltransferase, found in Shewanella sp. (strain MR-4).